Reading from the N-terminus, the 469-residue chain is A-type ATP synthase subunit B 3 (469 aa).

It belongs to the ATPase alpha/beta chains family. In terms of assembly, has multiple subunits with at least A(3), B(3), C, D, E, F, H, I and proteolipid K(x).

It is found in the cell membrane. Component of the A-type ATP synthase that produces ATP from ADP in the presence of a proton gradient across the membrane. The B chain is a regulatory subunit. The polypeptide is A-type ATP synthase subunit B 3 (Methanospirillum hungatei JF-1 (strain ATCC 27890 / DSM 864 / NBRC 100397 / JF-1)).